The chain runs to 202 residues: Mevalonate-3-phosphate 5-kinase (202 aa).

The catalysed reaction is (R)-3-phosphomevalonate + ATP = (R)-3,5-bisphosphomevalonate + ADP + H(+). Its pathway is isoprenoid biosynthesis; isopentenyl diphosphate biosynthesis via mevalonate pathway. Functionally, phosphorylates mevalonate 3-phosphate to form mevalonate 3,5-bisphosphate. Functions in an alternative mevalonate pathway, only present in extreme acidophiles of the Thermoplasmatales order, which passes through mevalonate 3-phosphate rather than mevalonate 5-phosphate. In Thermoplasma acidophilum (strain ATCC 25905 / DSM 1728 / JCM 9062 / NBRC 15155 / AMRC-C165), this protein is Mevalonate-3-phosphate 5-kinase.